Reading from the N-terminus, the 176-residue chain is SDCQVSNIQVMQNFDRSRYTGRWYAVAKKDPVGLFLLDNVVAQFSVDGSGKVTATAQGRVIILNNWEMCANMFGTFEDTPDPAKFKMRYWGAAAYLQSGNDDHWVIDTDYDNYAIHYSCREVDLDGTCLDGYSFIFSRHPTGLRPEDQKIVTDKKKELCFLGKYRRVSHTGFCESS.

Ser-1 carries the post-translational modification N-acetylserine. 3 disulfide bridges follow: Cys-3–Cys-159, Cys-69–Cys-173, and Cys-119–Cys-128. Gln-97 contacts substrate.

This sequence belongs to the calycin superfamily. Lipocalin family.

The protein resides in the secreted. Its function is as follows. RBP delivers retinol from the liver stores to the peripheral tissues. In plasma, the RBP-retinol complex interacts with transthyretin, this prevents its loss by filtration through the kidney glomeruli. In Oncorhynchus mykiss (Rainbow trout), this protein is Retinol-binding protein 4-B (rbp4b).